The chain runs to 171 residues: ATP synthase subunit b (171 aa).

A helical membrane pass occupies residues V2–L22.

Belongs to the ATPase B chain family. In terms of assembly, F-type ATPases have 2 components, F(1) - the catalytic core - and F(0) - the membrane proton channel. F(1) has five subunits: alpha(3), beta(3), gamma(1), delta(1), epsilon(1). F(0) has three main subunits: a(1), b(2) and c(10-14). The alpha and beta chains form an alternating ring which encloses part of the gamma chain. F(1) is attached to F(0) by a central stalk formed by the gamma and epsilon chains, while a peripheral stalk is formed by the delta and b chains.

The protein resides in the cell inner membrane. In terms of biological role, f(1)F(0) ATP synthase produces ATP from ADP in the presence of a proton or sodium gradient. F-type ATPases consist of two structural domains, F(1) containing the extramembraneous catalytic core and F(0) containing the membrane proton channel, linked together by a central stalk and a peripheral stalk. During catalysis, ATP synthesis in the catalytic domain of F(1) is coupled via a rotary mechanism of the central stalk subunits to proton translocation. Component of the F(0) channel, it forms part of the peripheral stalk, linking F(1) to F(0). This chain is ATP synthase subunit b, found in Helicobacter acinonychis (strain Sheeba).